Consider the following 342-residue polypeptide: UDP-N-acetylglucosamine--N-acetylmuramyl-(pentapeptide) pyrophosphoryl-undecaprenol N-acetylglucosamine transferase (342 aa).

UDP-N-acetyl-alpha-D-glucosamine is bound by residues 10–12 (TGG), N124, S177, and Q275.

It belongs to the glycosyltransferase 28 family. MurG subfamily.

Its subcellular location is the cell inner membrane. It carries out the reaction di-trans,octa-cis-undecaprenyl diphospho-N-acetyl-alpha-D-muramoyl-L-alanyl-D-glutamyl-meso-2,6-diaminopimeloyl-D-alanyl-D-alanine + UDP-N-acetyl-alpha-D-glucosamine = di-trans,octa-cis-undecaprenyl diphospho-[N-acetyl-alpha-D-glucosaminyl-(1-&gt;4)]-N-acetyl-alpha-D-muramoyl-L-alanyl-D-glutamyl-meso-2,6-diaminopimeloyl-D-alanyl-D-alanine + UDP + H(+). It functions in the pathway cell wall biogenesis; peptidoglycan biosynthesis. Functionally, cell wall formation. Catalyzes the transfer of a GlcNAc subunit on undecaprenyl-pyrophosphoryl-MurNAc-pentapeptide (lipid intermediate I) to form undecaprenyl-pyrophosphoryl-MurNAc-(pentapeptide)GlcNAc (lipid intermediate II). The chain is UDP-N-acetylglucosamine--N-acetylmuramyl-(pentapeptide) pyrophosphoryl-undecaprenol N-acetylglucosamine transferase from Campylobacter jejuni subsp. jejuni serotype O:2 (strain ATCC 700819 / NCTC 11168).